Consider the following 148-residue polypeptide: Cdc42 effector protein 5 (148 aa).

2 disordered regions span residues 1–89 and 111–148; these read MPVL…DPLL and RPEA…VIGL. Residues 23–37 form the CRIB domain; sequence ISAPLGDFRHTLHVG. Arg38 is modified (omega-N-methylarginine). Positions 55–76 are enriched in pro residues; the sequence is GPPPEPRAPPAGAPRSPPPPAV. Positions 77-87 are enriched in low complexity; that stretch reads PQSAAPSPADP.

It belongs to the BORG/CEP family. Interacts with CDC42, in a GTP-dependent manner, and with SEPT7.

It is found in the endomembrane system. The protein resides in the cytoplasm. Its subcellular location is the cytoskeleton. In terms of biological role, probably involved in the organization of the actin cytoskeleton. May act downstream of CDC42 to induce actin filament assembly leading to cell shape changes. Induces pseudopodia formation in fibroblasts. Inhibits MAPK8 independently of CDC42 binding. Controls septin organization and this effect is negatively regulated by CDC42. This chain is Cdc42 effector protein 5 (CDC42EP5), found in Homo sapiens (Human).